The sequence spans 853 residues: DNA mismatch repair protein MutS (853 aa).

Position 614 to 621 (Gly-614 to Ser-621) interacts with ATP.

The protein belongs to the DNA mismatch repair MutS family.

Its function is as follows. This protein is involved in the repair of mismatches in DNA. It is possible that it carries out the mismatch recognition step. This protein has a weak ATPase activity. The sequence is that of DNA mismatch repair protein MutS from Shigella flexneri serotype 5b (strain 8401).